We begin with the raw amino-acid sequence, 968 residues long: RNA polymerase-associated protein RapA (968 aa).

The 171-residue stretch at Asp-164–Asn-334 folds into the Helicase ATP-binding domain. Asp-177 to Thr-184 is a binding site for ATP. Positions Asp-280–His-283 match the DEAH box motif. The Helicase C-terminal domain maps to Arg-490–Arg-685.

The protein belongs to the SNF2/RAD54 helicase family. RapA subfamily. Interacts with the RNAP. Has a higher affinity for the core RNAP than for the holoenzyme. Its ATPase activity is stimulated by binding to RNAP.

Its function is as follows. Transcription regulator that activates transcription by stimulating RNA polymerase (RNAP) recycling in case of stress conditions such as supercoiled DNA or high salt concentrations. Probably acts by releasing the RNAP, when it is trapped or immobilized on tightly supercoiled DNA. Does not activate transcription on linear DNA. Probably not involved in DNA repair. The chain is RNA polymerase-associated protein RapA from Salmonella paratyphi A (strain ATCC 9150 / SARB42).